The following is a 367-amino-acid chain: tRNA-specific 2-thiouridylase MnmA (367 aa).

ATP-binding positions include 13–20 (GLSGGVDS) and Met-39. The segment at 99–101 (NPD) is interaction with target base in tRNA. Cys-104 (nucleophile) is an active-site residue. Cysteines 104 and 200 form a disulfide. Gly-128 lines the ATP pocket. An interaction with tRNA region spans residues 150 to 152 (KDQ). The Cysteine persulfide intermediate role is filled by Cys-200. Residues 307–308 (RY) are interaction with tRNA.

Belongs to the MnmA/TRMU family.

It localises to the cytoplasm. The enzyme catalyses S-sulfanyl-L-cysteinyl-[protein] + uridine(34) in tRNA + AH2 + ATP = 2-thiouridine(34) in tRNA + L-cysteinyl-[protein] + A + AMP + diphosphate + H(+). In terms of biological role, catalyzes the 2-thiolation of uridine at the wobble position (U34) of tRNA, leading to the formation of s(2)U34. This Neisseria meningitidis serogroup B (strain ATCC BAA-335 / MC58) protein is tRNA-specific 2-thiouridylase MnmA.